Reading from the N-terminus, the 93-residue chain is MANKKIDHREEAVELLKQDAKRILQLIKVQMDNLTLPQCPAYEEVLDTQMYGLSREINFATRLGLIEPEEGKKLMSTLEKELSALHELSMSKK.

It belongs to the UPF0358 family.

This is UPF0358 protein LMHCC_1561 from Listeria monocytogenes serotype 4a (strain HCC23).